The chain runs to 209 residues: MSTLHLIDHPLVQHKLTLMRRKEASTNSFRRMLGELSTLMAYEITRDMPLQDIEIETPLETMTGKVIDGKKLVLVSILRAGNGFLDGMLNVVPGARIGHIGLYRDPETLQPVEYYFKMPSEMEERDVLVVDPMLATGNSAAAAVARLKQLNPKSIKFMCLLAAPEGVATMQKAHPDVDIYTAAVDRQLDAHGYILPGLGDAGDRIFGTK.

5-phospho-alpha-D-ribose 1-diphosphate is bound by residues arginine 79, arginine 104, and 131–139; that span reads DPMLATGNS. Residues isoleucine 194 and 199–201 contribute to the uracil site; that span reads GDA. Aspartate 200 provides a ligand contact to 5-phospho-alpha-D-ribose 1-diphosphate.

It belongs to the UPRTase family. It depends on Mg(2+) as a cofactor.

The catalysed reaction is UMP + diphosphate = 5-phospho-alpha-D-ribose 1-diphosphate + uracil. It functions in the pathway pyrimidine metabolism; UMP biosynthesis via salvage pathway; UMP from uracil: step 1/1. With respect to regulation, allosterically activated by GTP. Catalyzes the conversion of uracil and 5-phospho-alpha-D-ribose 1-diphosphate (PRPP) to UMP and diphosphate. The polypeptide is Uracil phosphoribosyltransferase (Delftia acidovorans (strain DSM 14801 / SPH-1)).